Here is a 62-residue protein sequence, read N- to C-terminus: Photosystem II reaction center protein Z (62 aa).

2 helical membrane-spanning segments follow: residues 8 to 28 (ALFA…IVFA) and 41 to 61 (FSGT…NSLI).

It belongs to the PsbZ family. PSII is composed of 1 copy each of membrane proteins PsbA, PsbB, PsbC, PsbD, PsbE, PsbF, PsbH, PsbI, PsbJ, PsbK, PsbL, PsbM, PsbT, PsbY, PsbZ, Psb30/Ycf12, at least 3 peripheral proteins of the oxygen-evolving complex and a large number of cofactors. It forms dimeric complexes.

It is found in the plastid. It localises to the chloroplast thylakoid membrane. Its function is as follows. May control the interaction of photosystem II (PSII) cores with the light-harvesting antenna, regulates electron flow through the 2 photosystem reaction centers. PSII is a light-driven water plastoquinone oxidoreductase, using light energy to abstract electrons from H(2)O, generating a proton gradient subsequently used for ATP formation. This is Photosystem II reaction center protein Z from Drimys granadensis.